An 84-amino-acid polypeptide reads, in one-letter code: Small ribosomal subunit protein uS15 (84 aa).

Belongs to the universal ribosomal protein uS15 family. Part of the 30S ribosomal subunit. Forms a bridge to the 50S subunit in the 70S ribosome, contacting the 23S rRNA.

In terms of biological role, one of the primary rRNA binding proteins, it binds directly to 16S rRNA where it helps nucleate assembly of the platform of the 30S subunit by binding and bridging several RNA helices of the 16S rRNA. Its function is as follows. Forms an intersubunit bridge (bridge B4) with the 23S rRNA of the 50S subunit in the ribosome. This is Small ribosomal subunit protein uS15 from Fervidobacterium nodosum (strain ATCC 35602 / DSM 5306 / Rt17-B1).